A 130-amino-acid polypeptide reads, in one-letter code: MYKAETRGISVTVQSRFVEEESSPTESRYFFAYTVEIVNNGSEQVQLRSRHWRIIDGHGACQEVRGTGVVGKQPVLEPGESFCYTSGCPLNTPDGLMAGSYTMATVAGESFEAEIPAFSLDSPHVRRSLH.

One can recognise an ApaG domain in the interval Lys-3–Arg-127.

The polypeptide is Protein ApaG (Methylobacterium radiotolerans (strain ATCC 27329 / DSM 1819 / JCM 2831 / NBRC 15690 / NCIMB 10815 / 0-1)).